The chain runs to 87 residues: U3-theraphotoxin-Hhn1a 18 (87 aa).

A signal peptide spans 1–24; sequence MVNTKASMFLTFAGLVLLFVVCYA. The propeptide occupies 25 to 52; sequence SESEEKEFPKEMLSSIFAVDNDFKQEER. 3 disulfides stabilise this stretch: cysteine 54–cysteine 67, cysteine 61–cysteine 72, and cysteine 66–cysteine 79.

It belongs to the neurotoxin 10 (Hwtx-1) family. 51 (Hntx-8) subfamily. Hntx-8 sub-subfamily. In terms of tissue distribution, expressed by the venom gland.

It localises to the secreted. Its function is as follows. Ion channel inhibitor. The sequence is that of U3-theraphotoxin-Hhn1a 18 from Cyriopagopus hainanus (Chinese bird spider).